An 80-amino-acid chain; its full sequence is Caltrin (80 aa).

Residues 1 to 32 (MMAGRRSWPAMATVLLALLVCLGELVDSKPQP) form the signal peptide.

Inhibits calcium transport into spermatozoa; it does not bind directly to calcium. Binds to calmodulin. Inhibits the growth of microorganisms. Seem to act as an antibiotic by permeabilizing the bacterial membrane. This chain is Caltrin (PYY2), found in Bos taurus (Bovine).